The following is a 338-amino-acid chain: 1-aminocyclopropane-1-carboxylate deaminase (338 aa).

Residue Lys-51 is modified to N6-(pyridoxal phosphate)lysine. Catalysis depends on Ser-78, which acts as the Nucleophile.

The protein belongs to the ACC deaminase/D-cysteine desulfhydrase family. As to quaternary structure, homotrimer. Pyridoxal 5'-phosphate is required as a cofactor.

The catalysed reaction is 1-aminocyclopropane-1-carboxylate + H2O = 2-oxobutanoate + NH4(+). Functionally, catalyzes a cyclopropane ring-opening reaction, the irreversible conversion of 1-aminocyclopropane-1-carboxylate (ACC) to ammonia and alpha-ketobutyrate. Allows growth on ACC as a nitrogen source. This Pseudomonas syringae pv. syringae (strain B728a) protein is 1-aminocyclopropane-1-carboxylate deaminase.